The chain runs to 460 residues: uncharacterized protein (460 aa).

The TRAM domain occupies 9–67 (NFKKNDIFEAEVLDLTHEGQGVVKIDSFPFFVDNALPGERIKMHVLKVGKSFGFGRVDE). The S-adenosyl-L-methionine site is built by Q292, Y321, E342, and D390. C417 (nucleophile) is an active-site residue.

Belongs to the class I-like SAM-binding methyltransferase superfamily. RNA M5U methyltransferase family.

This is an uncharacterized protein from Lactococcus lactis subsp. lactis (strain IL1403) (Streptococcus lactis).